Consider the following 218-residue polypeptide: Large ribosomal subunit protein uL3 (218 aa).

Residues 137 to 157 (GVGASHGAHKNHRKPGSIGGA) are disordered.

It belongs to the universal ribosomal protein uL3 family. As to quaternary structure, part of the 50S ribosomal subunit. Forms a cluster with proteins L14 and L19.

In terms of biological role, one of the primary rRNA binding proteins, it binds directly near the 3'-end of the 23S rRNA, where it nucleates assembly of the 50S subunit. In Kocuria rhizophila (strain ATCC 9341 / DSM 348 / NBRC 103217 / DC2201), this protein is Large ribosomal subunit protein uL3.